A 794-amino-acid polypeptide reads, in one-letter code: Zinc finger Y-chromosomal protein 1 (794 aa).

The Nuclear localization signal motif lies at 380–389 (TKQKLKKKRR). C2H2-type zinc fingers lie at residues 411-433 (YPCM…MKNH), 442-464 (YRCT…LESH), 477-499 (LECE…KLTH), 508-531 (HICK…LAVH), 537-559 (HICV…MRTH), 565-588 (YLCQ…KTKH), 594-616 (FKCD…AILH), 622-645 (HQCL…ISVH), 651-673 (HKCE…EAAH), 679-702 (HQCR…LSVH), 708-730 (YRCK…MKTH), 736-759 (YQCE…ISIH), and 765-788 (HRCD…LKHH).

Belongs to the krueppel C2H2-type zinc-finger protein family. ZFX/ZFY subfamily.

The protein resides in the nucleus. Probable transcriptional activator. The polypeptide is Zinc finger Y-chromosomal protein 1 (zfy1) (Xenopus laevis (African clawed frog)).